The sequence spans 822 residues: Glycerol-3-phosphate acyltransferase (822 aa).

Positions 306–311 (CHRSHM) match the HXXXXD motif motif. A disordered region spans residues 803-822 (ASSSAEMEAESQAVEETTQE).

Belongs to the GPAT/DAPAT family.

It is found in the cell inner membrane. The catalysed reaction is sn-glycerol 3-phosphate + an acyl-CoA = a 1-acyl-sn-glycero-3-phosphate + CoA. It participates in phospholipid metabolism; CDP-diacylglycerol biosynthesis; CDP-diacylglycerol from sn-glycerol 3-phosphate: step 1/3. The sequence is that of Glycerol-3-phosphate acyltransferase from Pectobacterium carotovorum subsp. carotovorum (strain PC1).